A 356-amino-acid chain; its full sequence is Cyanide hydratase (356 aa).

The 276-residue stretch at 15–290 (FKVAAVQAEP…EVVLYANISL (276 aa)) folds into the CN hydrolase domain. The Proton acceptor role is filled by E55. Residue K137 is part of the active site. The active-site Nucleophile is C172. Residues 331 to 356 (DEQAASKAQQAEIDNAGKGSIVPSKL) are disordered.

The protein belongs to the carbon-nitrogen hydrolase superfamily. Nitrilase family.

It carries out the reaction formamide = hydrogen cyanide + H2O. Functionally, catalyzes the hydration of cyanide to formamide. Degradation of cyanide may be important for plant pathogenic fungi in infection of cyanogenic plants. The sequence is that of Cyanide hydratase from Armillaria gallica (Bulbous honey fungus).